Consider the following 346-residue polypeptide: Membrane progestin receptor alpha (346 aa).

Topologically, residues 1 to 72 (MAMAQKLSHL…RTLFQQHNEA (72 aa)) are cytoplasmic. The helical transmembrane segment at 73–93 (VNVWTHLLAALVLLLRLALFV) threads the bilayer. The Extracellular portion of the chain corresponds to 94 to 103 (ETVDFWGDPH). Residues 104-124 (ALPLFIIVLASFTYLSFSALA) form a helical membrane-spanning segment. Over 125–137 (HLLQAKSEFWHYS) the chain is Cytoplasmic. The helical transmembrane segment at 138–158 (FFFLDYVGVAVYQFGSALAHF) threads the bilayer. Topologically, residues 159–169 (YYAIEPAWHAQ) are extracellular. Residues 170–190 (VQAVFLPMAAFLAWLSCIGSC) traverse the membrane as a helical segment. Residues 191-237 (YNKYIQKPGLLGRTCQEVPSVLAYALDISPVVHRIFVSSDPTTDDPA) lie on the Cytoplasmic side of the membrane. The helical transmembrane segment at 238 to 258 (LLYHKCQVVFFLLAAAFFSTF) threads the bilayer. Over 259–276 (MPERWFPGSCHVFGQGHQ) the chain is Extracellular. Residues 277-297 (LFHIFLVLCTLAQLEAVALDY) form a helical membrane-spanning segment. The Cytoplasmic portion of the chain corresponds to 298-316 (EARRPIYEPLHTHWPHNFS). The helical transmembrane segment at 317 to 337 (GLFLLTVGSSILTAFLLSQLV) threads the bilayer. Over 338–346 (QRKLDQKTK) the chain is Extracellular.

The protein belongs to the ADIPOR family. Expressed in a wide range of tissues including ovary, testis, placenta, uterus and bladder.

The protein localises to the cell membrane. Functionally, plasma membrane progesterone (P4) receptor coupled to G proteins. Seems to act through a G(i) mediated pathway. May be involved in oocyte maturation. Involved in neurosteroid inhibition of apoptosis. Also binds dehydroepiandrosterone (DHEA), pregnanolone, pregnenolone and allopregnanolone. This chain is Membrane progestin receptor alpha, found in Homo sapiens (Human).